A 384-amino-acid polypeptide reads, in one-letter code: Probable RNA 3'-terminal phosphate cyclase-like protein (384 aa).

This sequence belongs to the RNA 3'-terminal cyclase family. Type 2 subfamily. As to quaternary structure, part of the small subunit (SSU) processome, composed of more than 70 proteins and the RNA chaperone small nucleolar RNA (snoRNA) U3.

The protein localises to the nucleus. It is found in the nucleolus. Functionally, part of the small subunit (SSU) processome, first precursor of the small eukaryotic ribosomal subunit. During the assembly of the SSU processome in the nucleolus, many ribosome biogenesis factors, an RNA chaperone and ribosomal proteins associate with the nascent pre-rRNA and work in concert to generate RNA folding, modifications, rearrangements and cleavage as well as targeted degradation of pre-ribosomal RNA by the RNA exosome. Does not have cyclase activity. In Drosophila melanogaster (Fruit fly), this protein is Probable RNA 3'-terminal phosphate cyclase-like protein (Rtc1).